Reading from the N-terminus, the 583-residue chain is 2-succinyl-5-enolpyruvyl-6-hydroxy-3-cyclohexene-1-carboxylate synthase (583 aa).

Belongs to the TPP enzyme family. MenD subfamily. Homodimer. The cofactor is Mg(2+). It depends on Mn(2+) as a cofactor. Thiamine diphosphate serves as cofactor.

The enzyme catalyses isochorismate + 2-oxoglutarate + H(+) = 5-enolpyruvoyl-6-hydroxy-2-succinyl-cyclohex-3-ene-1-carboxylate + CO2. The protein operates within quinol/quinone metabolism; 1,4-dihydroxy-2-naphthoate biosynthesis; 1,4-dihydroxy-2-naphthoate from chorismate: step 2/7. It functions in the pathway quinol/quinone metabolism; menaquinone biosynthesis. Catalyzes the thiamine diphosphate-dependent decarboxylation of 2-oxoglutarate and the subsequent addition of the resulting succinic semialdehyde-thiamine pyrophosphate anion to isochorismate to yield 2-succinyl-5-enolpyruvyl-6-hydroxy-3-cyclohexene-1-carboxylate (SEPHCHC). The protein is 2-succinyl-5-enolpyruvyl-6-hydroxy-3-cyclohexene-1-carboxylate synthase of Chlorobium chlorochromatii (strain CaD3).